The chain runs to 199 residues: Mediator of RNA polymerase II transcription subunit 10 (199 aa).

The protein belongs to the Mediator complex subunit 10 family. In terms of assembly, component of the Mediator complex.

The protein resides in the nucleus. In terms of biological role, component of the Mediator complex, a coactivator involved in the regulated transcription of nearly all RNA polymerase II-dependent genes. Mediator functions as a bridge to convey information from gene-specific regulatory proteins to the basal RNA polymerase II transcription machinery. Mediator is recruited to promoters by direct interactions with regulatory proteins and serves as a scaffold for the assembly of a functional preinitiation complex with RNA polymerase II and the general transcription factors. This Candida glabrata (strain ATCC 2001 / BCRC 20586 / JCM 3761 / NBRC 0622 / NRRL Y-65 / CBS 138) (Yeast) protein is Mediator of RNA polymerase II transcription subunit 10 (NUT2).